Here is a 287-residue protein sequence, read N- to C-terminus: Eukaryotic translation initiation factor 3 subunit F (287 aa).

The 131-residue stretch at 12 to 142 (VRVHPVVLFQ…IKAYVCVSLG (131 aa)) folds into the MPN domain.

Belongs to the eIF-3 subunit F family. As to quaternary structure, component of the eukaryotic translation initiation factor 3 (eIF-3) complex.

It localises to the cytoplasm. Its function is as follows. Component of the eukaryotic translation initiation factor 3 (eIF-3) complex, which is involved in protein synthesis of a specialized repertoire of mRNAs and, together with other initiation factors, stimulates binding of mRNA and methionyl-tRNAi to the 40S ribosome. The eIF-3 complex specifically targets and initiates translation of a subset of mRNAs involved in cell proliferation. The chain is Eukaryotic translation initiation factor 3 subunit F from Anopheles gambiae (African malaria mosquito).